The chain runs to 151 residues: Large ribosomal subunit protein bL9 (151 aa).

The protein belongs to the bacterial ribosomal protein bL9 family.

Functionally, binds to the 23S rRNA. This is Large ribosomal subunit protein bL9 from Rhodococcus jostii (strain RHA1).